A 714-amino-acid chain; its full sequence is Polyribonucleotide nucleotidyltransferase (714 aa).

Residues aspartate 489 and aspartate 495 each coordinate Mg(2+). Positions 556-615 constitute a KH domain; that stretch reads PKIDTIKIDVDKIKVVIGKGGETIDKIIAETGVKIDIDEEGNVSIYSSDQDAINRAKEII. Residues 625–693 enclose the S1 motif domain; sequence GEVYHAKVVR…DKGRIDASMK (69 aa). The interval 691–714 is disordered; that stretch reads SMKALVPRPPKPEKSEAKKEGKHD. Residues 700–714 are compositionally biased toward basic and acidic residues; the sequence is PKPEKSEAKKEGKHD.

It belongs to the polyribonucleotide nucleotidyltransferase family. Mg(2+) is required as a cofactor.

The protein localises to the cytoplasm. It carries out the reaction RNA(n+1) + phosphate = RNA(n) + a ribonucleoside 5'-diphosphate. In terms of biological role, involved in mRNA degradation. Catalyzes the phosphorolysis of single-stranded polyribonucleotides processively in the 3'- to 5'-direction. The sequence is that of Polyribonucleotide nucleotidyltransferase from Streptococcus equi subsp. zooepidemicus (strain MGCS10565).